The primary structure comprises 348 residues: ECA polysaccharide chain length modulation protein (348 aa).

The next 2 membrane-spanning stretches (helical) occupy residues 31-51 (FWII…TFFA) and 323-343 (AFLM…VALT).

The protein belongs to the WzzB/Cld/Rol family. In terms of assembly, probably part of a complex composed of WzxE, WzyE and WzzE.

The protein localises to the cell inner membrane. Its pathway is bacterial outer membrane biogenesis; enterobacterial common antigen biosynthesis. In terms of biological role, modulates the polysaccharide chain length of enterobacterial common antigen (ECA). The sequence is that of ECA polysaccharide chain length modulation protein from Salmonella typhimurium (strain LT2 / SGSC1412 / ATCC 700720).